We begin with the raw amino-acid sequence, 384 residues long: Histone acetyltransferase type B subunit 2 (384 aa).

WD repeat units lie at residues 156–196, 203–243, 247–287, 291–331, and 348–384; these read GHSA…SSIS, RHET…CIHA, AHTS…QPLH, GHSK…AEVP, and GHTS…PQPE.

The protein belongs to the WD repeat RBAP46/RBAP48/MSI1 family. As to quaternary structure, component of the HAT-B complex.

Its subcellular location is the cytoplasm. The protein resides in the nucleus. In terms of biological role, regulatory subunit of the histone acetylase B (HAT-B) complex. The complex acetylates histone H4 which is required for telomeric silencing. This is Histone acetyltransferase type B subunit 2 (HAT2) from Encephalitozoon cuniculi (strain GB-M1) (Microsporidian parasite).